The following is an 889-amino-acid chain: F-BAR domain only protein 1 (889 aa).

The region spanning 1 to 248 (MSYFGEHFWG…NIENVSVEML (248 aa)) is the F-BAR domain. Residues 1–275 (MSYFGEHFWG…LDFEAYSAAA (275 aa)) form a mediates membrane-binding region. Residues 156–195 (TSQKEMDKAETKTKKAAESLRRSVEKYNSARADFEQKMLD) are a coiled coil. The tract at residues 267 to 442 (DFEAYSAAAL…KNLFGPPLES (176 aa)) is mediates interaction with the adaptor protein complex AP-2. Residues 294-352 (LSRREREPEPPAAVDFLEPDSGTCPEVDEEGFTVRPDVTQNSTAEPSRFSSSDSDFDDE) are disordered. Residues S295, S347, and S372 each carry the phosphoserine modification. A disordered region spans residues 382–596 (ATAGSLILPP…SPLGSSAAST (215 aa)). The span at 450–469 (TGSSSLGFTSSPSPFSSSSP) shows a compositional bias: low complexity. Pro residues predominate over residues 496–511 (PGTPQSPPSCRAPPPE). S530 is modified (phosphoserine). The span at 580–596 (LSRSLSPSPLGSSAAST) shows a compositional bias: low complexity. Residues 609 to 889 (HGVSRGPSPV…FATGMYLVSC (281 aa)) are mediates interaction with AGFG1, CALM, DAB2, EPS15, EPS15R, ITSN1 and clathrin. The residue at position 616 (S616) is a Phosphoserine. Positions 625–888 (ALPIATAFTE…RFATGMYLVS (264 aa)) constitute an MHD domain. The tract at residues 826–849 (AGGSGRLSASWEPLSGPSTPSPVA) is disordered.

This sequence belongs to the FCHO family. As to quaternary structure, may oligomerize and form homotetramer. Interacts with AP2A2 and AP2B1; 2 subunits of the adaptor protein complex AP-2. Interacts with DAB2. Interacts with clathrin (CLTC or CLTCL1). Interacts with EPS15, EPS15R and ITSN1. Interacts with AGFG1 and CALM. May interact with ACVR1; linking this receptor to clathrin-mediated endocytosis. As to expression, predominantly expressed in lymphoid cells.

The protein localises to the membrane. Its subcellular location is the clathrin-coated pit. Functions in an early step of clathrin-mediated endocytosis. Has both a membrane binding/bending activity and the ability to recruit proteins essential to the formation of functional clathrin-coated pits. May regulate Bmp signaling by regulating clathrin-mediated endocytosis of Bmp receptors. Involved in the regulation of T-cell poliferation and activation. Affects TCR clustering upon receptor triggering and modulates its internalisation, playing a role in TCR-dependent T-cell activation. The protein is F-BAR domain only protein 1 of Homo sapiens (Human).